We begin with the raw amino-acid sequence, 78 residues long: Neurogranin (78 aa).

Position 1 is an N-acetylmethionine (M1). Residues 26-49 enclose the IQ domain; it reads ANAAAAKIQASFRGHMARKKIKSG. Position 36 is a phosphoserine; by PHK and PKC (S36). Residues 38–78 form a disordered region; the sequence is RGHMARKKIKSGERGRKGPGPGGPGGAGGARGGAGGGPSGD. The region spanning 50-78 is the Collagen-like domain; it reads ERGRKGPGPGGPGGAGGARGGAGGGPSGD. Positions 55–78 are enriched in gly residues; sequence GPGPGGPGGAGGARGGAGGGPSGD. The residue at position 68 (R68) is a Citrulline; partial. R68 bears the Omega-N-methylarginine mark.

The protein belongs to the neurogranin family. In terms of processing, the N-terminus is blocked. Phosphorylated at Ser-36 by PHK and PKC. Phosphorylation prevents interaction with Calmodulin and interrupts several learning- and memory-associated functions. Is highly enriched in brain. Accumulates postsynaptically in dendritic spines of neostriatal neurons.

In terms of biological role, acts as a 'third messenger' substrate of protein kinase C-mediated molecular cascades during synaptic development and remodeling. Binds to calmodulin in the absence of calcium. The sequence is that of Neurogranin (NRGN) from Bos taurus (Bovine).